The sequence spans 545 residues: uncharacterized protein (545 aa).

Positions 1–10 are enriched in basic residues; it reads MSRYRFRKAR. The disordered stretch occupies residues 1–25; that stretch reads MSRYRFRKARSNWPMGQNDSRWEPP. WD repeat units lie at residues 417 to 456 and 460 to 501; these read ACNTTFVRVLEKTRPECVVTEGFDSIIRIWDFRWPKNPMM and GHSN…MLCS.

This is an uncharacterized protein from Caenorhabditis elegans.